Reading from the N-terminus, the 138-residue chain is Phosphoribosyl-AMP cyclohydrolase (138 aa).

Residue Asp-86 participates in Mg(2+) binding. Zn(2+) is bound at residue Cys-87. Mg(2+) is bound by residues Asp-88 and Asp-90. 2 residues coordinate Zn(2+): Cys-104 and Cys-111.

This sequence belongs to the PRA-CH family. As to quaternary structure, homodimer. It depends on Mg(2+) as a cofactor. The cofactor is Zn(2+).

It localises to the cytoplasm. The catalysed reaction is 1-(5-phospho-beta-D-ribosyl)-5'-AMP + H2O = 1-(5-phospho-beta-D-ribosyl)-5-[(5-phospho-beta-D-ribosylamino)methylideneamino]imidazole-4-carboxamide. Its pathway is amino-acid biosynthesis; L-histidine biosynthesis; L-histidine from 5-phospho-alpha-D-ribose 1-diphosphate: step 3/9. Functionally, catalyzes the hydrolysis of the adenine ring of phosphoribosyl-AMP. This is Phosphoribosyl-AMP cyclohydrolase from Marinobacter nauticus (strain ATCC 700491 / DSM 11845 / VT8) (Marinobacter aquaeolei).